A 930-amino-acid chain; its full sequence is Protein translocase subunit SecA (930 aa).

Residues Q87, G105–T109, and D515 contribute to the ATP site. Residues C914, C916, C925, and H926 each coordinate Zn(2+).

This sequence belongs to the SecA family. As to quaternary structure, monomer and homodimer. Part of the essential Sec protein translocation apparatus which comprises SecA, SecYEG and auxiliary proteins SecDF-YajC and YidC. It depends on Zn(2+) as a cofactor.

It is found in the cell inner membrane. The protein localises to the cytoplasm. The catalysed reaction is ATP + H2O + cellular proteinSide 1 = ADP + phosphate + cellular proteinSide 2.. Its function is as follows. Part of the Sec protein translocase complex. Interacts with the SecYEG preprotein conducting channel. Has a central role in coupling the hydrolysis of ATP to the transfer of proteins into and across the cell membrane, serving both as a receptor for the preprotein-SecB complex and as an ATP-driven molecular motor driving the stepwise translocation of polypeptide chains across the membrane. This Burkholderia vietnamiensis (strain G4 / LMG 22486) (Burkholderia cepacia (strain R1808)) protein is Protein translocase subunit SecA.